A 228-amino-acid chain; its full sequence is MASEELQKDLEEVKVLLEKATRKRVRDALTAEKSKIETEIKNKMQQKSQKKAELLDNEKPAAVVAPITTGYTVKISNYGWDQSDKFVKIYITLTGVHQVPTENVQVHFTERSFDLLVKNLNGKSYSMIVNNLLKPISVEGSSKKVKTDTVLILCRKKVENTRWDYLTQVEKECKEKEKPSYDTETDPSEGLMNVLKKIYEDGDDDMKRTINKAWVESREKQAKGDTEF.

Position 1 is an N-acetylmethionine (methionine 1). N-acetylalanine is present on alanine 2. An interaction with SIAH1 region spans residues 2–80 (ASEELQKDLE…YTVKISNYGW (79 aa)). Phosphoserine is present on serine 3. An N6-acetyllysine mark is found at lysine 8 and lysine 19. The residue at position 34 (serine 34) is a Phosphoserine. In terms of domain architecture, CS spans 73–167 (VKISNYGWDQ…VENTRWDYLT (95 aa)). Positions 73–228 (VKISNYGWDQ…EKQAKGDTEF (156 aa)) are interaction with SKP1. An N6-acetyllysine mark is found at lysine 85 and lysine 118. The interval 154–228 (CRKKVENTRW…EKQAKGDTEF (75 aa)) is interaction with S100A6. The 61-residue stretch at 168 to 228 (QVEKECKEKE…EKQAKGDTEF (61 aa)) folds into the SGS domain.

In terms of assembly, homodimer. Interacts with proteins of the S100 family S100A1, S100A6, S100B, S100P and S100A12 in a calcium-dependent manner. Component of some large E3 complex at least composed of UBE2D1, SIAH1, CACYBP/SIP, SKP1, APC and TBL1X. Interacts directly with SIAH1, SIAH2 and SKP1. In terms of processing, phosphorylated on serine residues. Phosphorylated upon induction by RA or at high calcium concentrations.

It localises to the nucleus. Its subcellular location is the cytoplasm. In terms of biological role, may be involved in calcium-dependent ubiquitination and subsequent proteasomal degradation of target proteins. Probably serves as a molecular bridge in ubiquitin E3 complexes. Participates in the ubiquitin-mediated degradation of beta-catenin (CTNNB1). This is Calcyclin-binding protein (CACYBP) from Homo sapiens (Human).